We begin with the raw amino-acid sequence, 538 residues long: RNA-binding protein RO60 (538 aa).

The TROVE domain occupies valine 16–lysine 369. The RNA-binding stretch occupies residues arginine 120–asparagine 284. The VWFA-like domain stretch occupies residues phenylalanine 361–isoleucine 538. The a divalent metal cation site is built by serine 378, serine 380, and threonine 445.

This sequence belongs to the Ro 60 kDa family.

The protein localises to the cytoplasm. Its function is as follows. RNA-binding protein that binds to misfolded non-coding RNAs, pre-5S rRNA, and several small cytoplasmic RNA molecules known as Y RNAs. May play roles in cilia formation and/or maintenance. This is RNA-binding protein RO60 from Xenopus laevis (African clawed frog).